A 238-amino-acid chain; its full sequence is MKYAGILAGGIGSRMGNVPLPKQFLDLDNKPILIHTLEKFILINDFEKIIIATPQQWMTHTKDTLRKFKISDERIEVIQGGSDRNDTIMNIVKHIESTNGINDDDVIVTHDAVRPFLTHRIIKENIQAALEYGAVDTVIDAIDTIVTSKDDQTIDAIPVRNEMYQGQTPQSFNINLLKESYAQLSDEQKSILSDACKIIVETNKPVRLVKGELYNIKVTTPYDLKVANAIIRGGIADD.

CTP is bound by residues 7–10 (LAGG) and 81–87 (GSDRNDT).

It belongs to the IspD/TarI cytidylyltransferase family. TarI subfamily.

It carries out the reaction D-ribitol 5-phosphate + CTP + H(+) = CDP-L-ribitol + diphosphate. The protein operates within cell wall biogenesis; poly(ribitol phosphate) teichoic acid biosynthesis. Its function is as follows. Catalyzes the transfer of the cytidylyl group of CTP to D-ribitol 5-phosphate. The sequence is that of Ribitol-5-phosphate cytidylyltransferase 1 from Staphylococcus aureus (strain bovine RF122 / ET3-1).